The following is a 393-amino-acid chain: MDAATLTYDTLRFAEFEDFPETSEPVWILGRKYSIFTEKDEILSDVASRLWFTYRRNFPAIGGTGPTSDTGWGCMLRCGQMIFAQALVCRHLGRDWRWTQRKRQPDSYFNVLNAFLDRKDSYYSIHQIAQMGVGEGKSIGQWYGPNTVAQVLKKLAVFDTWSSLAVHIAMDNTVVMEEIRRLCRANLPCAGAAALPTDSERHCNGFPAGAEVTNRPSAWRPLVLLIPLRLGLTDINEAYVETLKHCFMMPQSLGVIGGKPNSAHYFIGYVGEELIYLDPHTTQPAVELTDSCFIPDESFHCQHPPSRMGIGELDPSIAVGFFCKTEEDFNDWCQQVKKLSQLGGALPMFELVEQQPSHLACQDVLNLSLDSSDVERLERFFDSEDEDFEILSL.

Methionine 1 is modified (N-acetylmethionine). Serine 34 carries the phosphoserine modification. Catalysis depends on cysteine 74, which acts as the Nucleophile. Residue cysteine 189 is modified to S-nitrosocysteine. Catalysis depends on residues aspartate 278 and histidine 280. S-nitrosocysteine is present on residues cysteine 292 and cysteine 301. Cysteines 292 and 361 form a disulfide. Residues serine 316 and serine 383 each carry the phosphoserine modification. Positions 388 to 391 match the LIR motif; that stretch reads FEIL. Serine 392 is subject to Phosphoserine.

It belongs to the peptidase C54 family. As to quaternary structure, interacts with PFKP; promoting phosphorylation of ATG4B at Ser-34. Interacts with GBP7. In terms of processing, phosphorylation at Ser-383 and Ser-392 promotes autophagy by increasing protein delipidation activity without affecting proteolytic activation of ATG8 proteins. Phosphorylation at Ser-316 by ULK1 inhibits autophagy by decreasing both proteolytic activation and delipidation activities. Phosphorylation at Ser-316 is dephosphorylated by protein phosphatase 2A (PP2A). Phosphorylation at Ser-34 by AKT2 promotes its hydrolase activity, leading to increased proteolytic activation and delipidation of ATG8 family proteins. Phosphorylation at Ser-34 by AKT1 promotes mitochondrial localization and inhibition of the F1F0-ATP synthase activity, leading to elevation of mitochondrial reactive oxygen species (ROS). Post-translationally, ubiquitinated by RNF5, leading to its degradation by the proteasome. S-nitrosylation at Cys-189 and Cys-292 in response to high glucose decreases both proteolytic activation and delipidation activities. In terms of processing, O-glycosylated by OGT, leading to increase protease activity, thereby promoting the proteolytic activation of ATG8 family proteins. Post-translationally, forms reversible intrachain disulfide bonds in response to oxidative stress. Forms interchain disulfide bonds, leading to formation of homooligomers in response to oxidation.

Its subcellular location is the cytoplasm. It localises to the cytosol. It is found in the cytoplasmic vesicle. The protein resides in the autophagosome. The protein localises to the endoplasmic reticulum. Its subcellular location is the mitochondrion. The catalysed reaction is [protein]-C-terminal L-amino acid-glycyl-phosphatidylethanolamide + H2O = [protein]-C-terminal L-amino acid-glycine + a 1,2-diacyl-sn-glycero-3-phosphoethanolamine. The enzyme catalyses [protein]-C-terminal L-amino acid-glycyl-phosphatidylserine + H2O = [protein]-C-terminal L-amino acid-glycine + a 1,2-diacyl-sn-glycero-3-phospho-L-serine. Its activity is regulated as follows. Inhibited by N-ethylmaleimide. Redox-regulated during autophagy since reducing conditions activate ATG4A whereas an oxidizing environment such as the presence of H(2)O(2) inhibits its activity. The cysteine protease activity compounds is inhibited by styrylquinoline compounds 4-28 and LV-320. In terms of biological role, cysteine protease that plays a key role in autophagy by mediating both proteolytic activation and delipidation of ATG8 family proteins. Required for canonical autophagy (macroautophagy), non-canonical autophagy as well as for mitophagy. The protease activity is required for proteolytic activation of ATG8 family proteins: cleaves the C-terminal amino acid of ATG8 proteins MAP1LC3A, MAP1LC3B, MAP1LC3C, GABARAPL1, GABARAPL2 and GABARAP, to reveal a C-terminal glycine. Exposure of the glycine at the C-terminus is essential for ATG8 proteins conjugation to phosphatidylethanolamine (PE) and insertion to membranes, which is necessary for autophagy. Protease activity is also required to counteract formation of high-molecular weight conjugates of ATG8 proteins (ATG8ylation): acts as a deubiquitinating-like enzyme that removes ATG8 conjugated to other proteins, such as ATG3. In addition to the protease activity, also mediates delipidation of ATG8 family proteins. Catalyzes delipidation of PE-conjugated forms of ATG8 proteins during macroautophagy. Also involved in non-canonical autophagy, a parallel pathway involving conjugation of ATG8 proteins to single membranes at endolysosomal compartments, by catalyzing delipidation of ATG8 proteins conjugated to phosphatidylserine (PS). Compared to other members of the family (ATG4A, ATG4C or ATG4C), constitutes the major protein for proteolytic activation of ATG8 proteins, while it displays weaker delipidation activity than other ATG4 paralogs. Involved in phagophore growth during mitophagy independently of its protease activity and of ATG8 proteins: acts by regulating ATG9A trafficking to mitochondria and promoting phagophore-endoplasmic reticulum contacts during the lipid transfer phase of mitophagy. The protein is Cysteine protease ATG4B of Mus musculus (Mouse).